The sequence spans 819 residues: Disintegrin and metalloproteinase domain-containing protein 9 (819 aa).

A signal peptide spans methionine 1–glycine 28. Residues alanine 29–aspartate 697 are Extracellular-facing. Residues asparagine 125, asparagine 144, asparagine 154, and asparagine 231 are each glycosylated (N-linked (GlcNAc...) asparagine). In terms of domain architecture, Peptidase M12B spans arginine 212–proline 406. Intrachain disulfides connect cysteine 322-cysteine 401, cysteine 363-cysteine 385, cysteine 365-cysteine 370, cysteine 473-cysteine 493, cysteine 644-cysteine 656, cysteine 650-cysteine 662, and cysteine 664-cysteine 673. Histidine 347 lines the Zn(2+) pocket. The active site involves glutamate 348. The Zn(2+) site is built by histidine 351 and histidine 357. N-linked (GlcNAc...) asparagine glycosylation is found at asparagine 381 and asparagine 487. Positions alanine 414–asparagine 501 constitute a Disintegrin domain. One can recognise an EGF-like domain in the interval cysteine 644–glycine 698. Residues glycine 698–isoleucine 718 traverse the membrane as a helical segment. Topologically, residues lysine 719 to threonine 819 are cytoplasmic. 2 disordered regions span residues glutamine 734–proline 763 and alanine 780–threonine 819. Positions threonine 735–proline 750 are enriched in polar residues. The residue at position 758 (serine 758) is a Phosphoserine. The residue at position 761 (threonine 761) is a Phosphothreonine.

Interacts with SH3GL2 and SNX9 through its cytoplasmic tail. Interacts with ITGA6. Requires Zn(2+) as cofactor. Proteolytically cleaved in the trans-Golgi network before it reaches the plasma membrane to generate a mature protein. The removal of the pro-domain occurs via cleavage at two different sites. Processed most likely by a pro-protein convertase such as furin, at the boundary between the pro-domain and the catalytic domain. An additional upstream cleavage pro-protein convertase site (Arg-56/Glu-57) has an important role in the activation of ADAM9. Post-translationally, phosphorylation is induced in vitro by phorbol-12-myristate-13-acetate (PMA). In terms of tissue distribution, widely expressed. Expressed in chondrocytes. Isoform 2 is highly expressed in liver and heart.

It localises to the cell membrane. The protein resides in the secreted. With respect to regulation, synthesized as an inactive form which is proteolytically cleaved to generate an active enzyme. Processing at the upstream site is particularly important for activation of the proenzyme, whereas processing at the boundary between the pro-domain and the catalytic domain does not appear to be essential. Inhibited by hydroxamic acid-based inhibitors. Functionally, metalloprotease that cleaves and releases a number of molecules with important roles in tumorigenesis and angiogenesis, such as TEK, KDR, EPHB4, CD40, VCAM1 and CDH5. May mediate cell-cell, cell-matrix interactions and regulate the motility of cells via interactions with integrins. In terms of biological role, may act as alpha-secretase for amyloid precursor protein (APP). The protein is Disintegrin and metalloproteinase domain-containing protein 9 (ADAM9) of Homo sapiens (Human).